Here is an 874-residue protein sequence, read N- to C-terminus: Alanine--tRNA ligase (874 aa).

His-562, His-566, Cys-665, and His-669 together coordinate Zn(2+).

Belongs to the class-II aminoacyl-tRNA synthetase family. Requires Zn(2+) as cofactor.

The protein resides in the cytoplasm. It catalyses the reaction tRNA(Ala) + L-alanine + ATP = L-alanyl-tRNA(Ala) + AMP + diphosphate. In terms of biological role, catalyzes the attachment of alanine to tRNA(Ala) in a two-step reaction: alanine is first activated by ATP to form Ala-AMP and then transferred to the acceptor end of tRNA(Ala). Also edits incorrectly charged Ser-tRNA(Ala) and Gly-tRNA(Ala) via its editing domain. This is Alanine--tRNA ligase from Pseudomonas putida (strain ATCC 47054 / DSM 6125 / CFBP 8728 / NCIMB 11950 / KT2440).